The sequence spans 517 residues: Splicing factor cactin (517 aa).

The span at 1–14 (MAFRDSTRDFNRSR) shows a compositional bias: basic and acidic residues. The tract at residues 1–59 (MAFRDSTRDFNRSRPEKRHASRSSSPRSFRPSNQNARANYNLPRVRDAMKEEERSRETK) is disordered. Residues 22–32 (RSSSPRSFRPS) are compositionally biased toward low complexity. The span at 44-59 (RVRDAMKEEERSRETK) shows a compositional bias: basic and acidic residues.

The protein belongs to the CACTIN family. As to quaternary structure, interacts with sde2. Interacts with cdc5.

In terms of biological role, plays a role in pre-mRNA splicing by facilitating excision of introns featuring long spacing between the branchpoint and 3'-splice site (ss). Recruited to the spliceosome by sde2, which may enable folding of the RNA between the BP and 3'-ss to guide the splice site towards the spliceosome's catalytic center. Assists the splicing of several components involved in chromatin organization. This chain is Splicing factor cactin, found in Schizosaccharomyces pombe (strain 972 / ATCC 24843) (Fission yeast).